A 617-amino-acid chain; its full sequence is tRNA uridine 5-carboxymethylaminomethyl modification enzyme MnmG (617 aa).

Residues 9–14 (GAGHAG), V121, and T176 each bind FAD. 269–283 (GPRYCPSIEDKFVRF) serves as a coordination point for NAD(+). Q366 lines the FAD pocket.

This sequence belongs to the MnmG family. As to quaternary structure, homodimer. Heterotetramer of two MnmE and two MnmG subunits. FAD serves as cofactor.

The protein localises to the cytoplasm. In terms of biological role, NAD-binding protein involved in the addition of a carboxymethylaminomethyl (cmnm) group at the wobble position (U34) of certain tRNAs, forming tRNA-cmnm(5)s(2)U34. This Acholeplasma laidlawii (strain PG-8A) protein is tRNA uridine 5-carboxymethylaminomethyl modification enzyme MnmG.